Reading from the N-terminus, the 404-residue chain is Plasma serine protease inhibitor (404 aa).

Residues 1–19 (MRLCLFLCLVLLGPRMATL) form the signal peptide. Positions 20–24 (RRSQK) are cleaved as a propeptide — removed in mature form. 2 O-linked (GalNAc...) threonine glycosylation sites follow: Thr-35 and Thr-36. N-linked (GlcNAc...) asparagine glycans are attached at residues Asn-245, Asn-258, and Asn-334.

Belongs to the serpin family. In terms of assembly, forms protease inhibiting heterodimers in extracellular body fluids with serine proteases such as activated protein C/coagulation factor V/F5, acrosin/ACR, chymotrypsinogen B/CTRB1, prothrombin/F2, factor Xa/F10, factor XI/F11, kallikrein/KLKB1, tissue kallikrein, trypsin/PRSS1, prostate specific antigen/KLK3, tissue plasminogen activator/PLAT and urinary plasminogen activator/PLAU. Forms membrane-anchored serine proteases inhibiting heterodimers with TMPRSS7 and TMPRSS11E. Interacts with SEMG2. Post-translationally, N-glycosylated; glycans consist of a mixture of sialylated bi- (including sialyl-Lewis X epitopes), tri- and tetra-antennary complex-type chains; affects the maximal heparin- and thrombomodulin-enhanced rates of thrombin inhibition. O-glycosylated; further modified with 2 sialic acid residues. Proteolytically cleaved at the N-terminus; inhibits slightly the heparin- and thrombomodulin-enhanced rates of thrombin inhibition. N- and O-glycosylated. In terms of processing, proteolytically cleaved. Inhibition of proteases is accompanied by formation of a stable enzyme-inhibitor complex and by degradation of the serpin to lower molecular weight derivatives. As to expression, expressed strongly in the liver, and moderately in the kidney and testis, but not in other tissues tested.

The protein resides in the secreted. The protein localises to the extracellular space. With respect to regulation, its inhibitory activity is greatly enhanced in the presence of glycosaminoglycans, heparin, thrombomodulin and phospholipids vesicles. Functionally, heparin-dependent serine protease inhibitor acting in body fluids and secretions. Inactivates serine proteases by binding irreversibly to their serine activation site. Involved in the regulation of intravascular and extravascular proteolytic activities. Plays hemostatic roles in the blood plasma. Acts as a procoagulant and pro-inflammatory factor by inhibiting the anticoagulant activated protein C factor as well as the generation of activated protein C factor by the thrombin/thrombomodulin complex. Acts as an anticoagulant factor by inhibiting blood coagulation factors like prothrombin, factor XI, factor Xa, plasma kallikrein and fibrinolytic enzymes such as tissue- and urinary-type plasminogen activators. In seminal plasma, inactivates several serine proteases implicated in the reproductive system. Inhibits the serpin acrosin; indirectly protects component of the male genital tract from being degraded by excessive released acrosin. Inhibits tissue- and urinary-type plasminogen activator, prostate-specific antigen and kallikrein activities; has a control on the sperm motility and fertilization. Inhibits the activated protein C-catalyzed degradation of SEMG1 and SEMG2; regulates the degradation of semenogelin during the process of transfer of spermatozoa from the male reproductive tract into the female tract. In urine, inhibits urinary-type plasminogen activator and kallikrein activities. Inactivates membrane-anchored serine proteases activities such as MPRSS7 and TMPRSS11E. Inhibits urinary-type plasminogen activator-dependent tumor cell invasion and metastasis. May also play a non-inhibitory role in seminal plasma and urine as a hydrophobic hormone carrier by its binding to retinoic acid. The polypeptide is Plasma serine protease inhibitor (SERPINA5) (Bos taurus (Bovine)).